Here is a 378-residue protein sequence, read N- to C-terminus: Erythronate-4-phosphate dehydrogenase (378 aa).

Substrate is bound by residues S45 and T66. NAD(+) contacts are provided by D146 and T175. The active site involves R208. NAD(+) is bound at residue D232. E237 is an active-site residue. H254 (proton donor) is an active-site residue. G257 serves as a coordination point for NAD(+). Y258 contacts substrate.

It belongs to the D-isomer specific 2-hydroxyacid dehydrogenase family. PdxB subfamily. As to quaternary structure, homodimer.

It is found in the cytoplasm. It carries out the reaction 4-phospho-D-erythronate + NAD(+) = (R)-3-hydroxy-2-oxo-4-phosphooxybutanoate + NADH + H(+). The protein operates within cofactor biosynthesis; pyridoxine 5'-phosphate biosynthesis; pyridoxine 5'-phosphate from D-erythrose 4-phosphate: step 2/5. Functionally, catalyzes the oxidation of erythronate-4-phosphate to 3-hydroxy-2-oxo-4-phosphonooxybutanoate. The sequence is that of Erythronate-4-phosphate dehydrogenase from Salmonella dublin (strain CT_02021853).